The sequence spans 130 residues: Small ribosomal subunit protein uS9 (130 aa).

The protein belongs to the universal ribosomal protein uS9 family.

This chain is Small ribosomal subunit protein uS9, found in Pseudomonas fluorescens (strain ATCC BAA-477 / NRRL B-23932 / Pf-5).